We begin with the raw amino-acid sequence, 163 residues long: Sperm surface protein Sp17 (163 aa).

Disordered stretches follow at residues 57–115 and 129–163; these read PAEW…EKEE and VARE…THEK. Basic and acidic residues-rich tracts occupy residues 62-98 and 129-139; these read SKVE…KEEE and VAREEVKKMKT. Positions 114 to 143 constitute an IQ domain; that stretch reads EEVAAVKIQAAFRGHVAREEVKKMKTDSLQ. A compositionally biased stretch (polar residues) spans 153-163; the sequence is DTGFTSRTHEK.

In terms of assembly, homodimer. May interact with ROPN1. As to expression, testis- and sperm-specific.

It localises to the membrane. In terms of biological role, sperm surface zona pellucida binding protein. Helps to bind spermatozoa to the zona pellucida with high affinity. Might function in binding zona pellucida and carbohydrates. The polypeptide is Sperm surface protein Sp17 (SPA17) (Papio hamadryas (Hamadryas baboon)).